A 361-amino-acid chain; its full sequence is Histidinol-phosphate aminotransferase (361 aa).

N6-(pyridoxal phosphate)lysine is present on Lys223.

This sequence belongs to the class-II pyridoxal-phosphate-dependent aminotransferase family. Histidinol-phosphate aminotransferase subfamily. In terms of assembly, homodimer. It depends on pyridoxal 5'-phosphate as a cofactor.

The catalysed reaction is L-histidinol phosphate + 2-oxoglutarate = 3-(imidazol-4-yl)-2-oxopropyl phosphate + L-glutamate. It functions in the pathway amino-acid biosynthesis; L-histidine biosynthesis; L-histidine from 5-phospho-alpha-D-ribose 1-diphosphate: step 7/9. This chain is Histidinol-phosphate aminotransferase, found in Deinococcus radiodurans (strain ATCC 13939 / DSM 20539 / JCM 16871 / CCUG 27074 / LMG 4051 / NBRC 15346 / NCIMB 9279 / VKM B-1422 / R1).